The primary structure comprises 321 residues: Arabinan endo-1,5-alpha-L-arabinosidase A (321 aa).

A signal peptide spans 1–19; sequence MYQLLSVASVPLLASLVHG. Aspartate 34 functions as the Proton acceptor in the catalytic mechanism. Glutamate 200 serves as the catalytic Proton donor. N-linked (GlcNAc...) asparagine glycosylation occurs at asparagine 295.

This sequence belongs to the glycosyl hydrolase 43 family.

It carries out the reaction Endohydrolysis of (1-&gt;5)-alpha-arabinofuranosidic linkages in (1-&gt;5)-arabinans.. It participates in glycan metabolism; L-arabinan degradation. In terms of biological role, its preferred substrate is linear 1,5-alpha-L-arabinan. The enzyme activity is progressively reduced as 1,5-alpha-chains become shorter or more highly substituted. The protein is Arabinan endo-1,5-alpha-L-arabinosidase A (abnA) of Aspergillus niger.